A 404-amino-acid polypeptide reads, in one-letter code: Trigger factor (404 aa).

One can recognise a PPIase FKBP-type domain in the interval 160-225 (KDHLFVRTEE…VLEVKTLKLP (66 aa)).

This sequence belongs to the FKBP-type PPIase family. Tig subfamily.

The protein localises to the cytoplasm. The enzyme catalyses [protein]-peptidylproline (omega=180) = [protein]-peptidylproline (omega=0). Functionally, involved in protein export. Acts as a chaperone by maintaining the newly synthesized protein in an open conformation. Functions as a peptidyl-prolyl cis-trans isomerase. In Thermus thermophilus (strain ATCC BAA-163 / DSM 7039 / HB27), this protein is Trigger factor.